We begin with the raw amino-acid sequence, 79 residues long: Ketoisovalerate oxidoreductase subunit VorC (79 aa).

2 consecutive 4Fe-4S ferredoxin-type domains span residues 4–33 (AYPV…MSNK) and 40–70 (HYVE…VHIE). [4Fe-4S] cluster is bound by residues C13, C16, C19, C23, C49, C52, C55, and C59.

Heterotrimer of the VorA, VorB and VorC subunits. [4Fe-4S] cluster serves as cofactor.

The enzyme catalyses 3-methyl-2-oxobutanoate + 2 oxidized [2Fe-2S]-[ferredoxin] + CoA = 2-methylpropanoyl-CoA + 2 reduced [2Fe-2S]-[ferredoxin] + CO2 + H(+). This Methanothermobacter marburgensis (strain ATCC BAA-927 / DSM 2133 / JCM 14651 / NBRC 100331 / OCM 82 / Marburg) (Methanobacterium thermoautotrophicum) protein is Ketoisovalerate oxidoreductase subunit VorC (vorC).